The sequence spans 662 residues: Transforming growth factor beta activator LRRC32 (662 aa).

The signal sequence occupies residues 1-17 (MRPQILLLLALLTLGLA). Residues 18–625 (AQRQDKVPCK…EDCEKGGLKN (608 aa)) are Extracellular-facing. One can recognise an LRRNT domain in the interval 21 to 48 (QDKVPCKMVDKKVSCQGLGLLQVPSVLP). 10 LRR repeats span residues 50–73 (DTETLDLSGNQLRSILASPLGFYT), 74–95 (ALRHLDLSTNEISFLQPGAFQA), 98–119 (HLEHLSLAHNRLAMATALSAGG), 125–145 (RVTSLDLSGNSLYSGLLERLL), 150–171 (SLHTLSLAENSLTRLTRHTFRD), 174–195 (VLEQLDLHSNVLMDIEDGAFEG), 198–219 (RLTHLNLSRNSLTCISDFSLQQ), 220–240 (LRVLDLSCNSIEAFQTASQPQ), 244–265 (QLTWLDLRENKLLHFPDLAALP), and 266–286 (RLIYLNLSNNLIRLPTGPPQD). The N-linked (GlcNAc...) asparagine glycan is linked to Asn-203. N-linked (GlcNAc...) asparagine glycans are attached at residues Asn-271 and Asn-308. LRR repeat units follow at residues 316–339 (QLLNLDLSYNEIELIPDSFLEHLT), 340–361 (SLCFLNLSRNCLRTFEARRSGS), 364–385 (CLMLLDLSHNALETLELGARAL), 387–408 (SLRTLLLQGNALRDLPPYTFAN), 411–432 (SLQRLNLQGNRVSPCGGPDEPG), 444–465 (SLHSLSLVDNEIELLRAGAFLH), 467–488 (PLTELDLSSNPGLEVATGALGG), 492–513 (SLEVLALQGNGLTVLQVDLPCF), 515–536 (CLKRLNLAENRLSHLPAWTQAV), and 537–558 (SLEVLDLRNNSFSLLPGSAMGG). N-linked (GlcNAc...) asparagine glycosylation is present at Asn-345. N-linked (GlcNAc...) asparagine glycosylation is present at Asn-545. Residues 571-620 (NPLSCCGNGWLAAQLHQGRVDVDATQDLICRFSSQEEVSLSHVRPEDCEK) enclose the LRRCT domain. The chain crosses the membrane as a helical span at residues 626–646 (INLIIILTFILVSAILLTTLA). The Cytoplasmic portion of the chain corresponds to 647–662 (TCCCVRRQKFNQQYKA).

Belongs to the LRRC32/LRRC33 family. As to quaternary structure, interacts with TGFB1; associates via disulfide bonds with the Latency-associated peptide chain (LAP) regulatory chain of TGFB1, leading to regulate activation of TGF-beta-1. Interacts with TGFB2. Interacts with TGFB3; associates via disulfide bonds with the Latency-associated peptide chain (LAP) regulatory chain of TGFB3, leading to regulate activation of TGF-beta-3. Interacts with LAPTM4B; decreases TGFB1 production in regulatory T-cells.

The protein localises to the cell membrane. It is found in the cell surface. Key regulator of transforming growth factor beta (TGFB1, TGFB2 and TGFB3) that controls TGF-beta activation by maintaining it in a latent state during storage in extracellular space. Associates specifically via disulfide bonds with the Latency-associated peptide (LAP), which is the regulatory chain of TGF-beta, and regulates integrin-dependent activation of TGF-beta. Able to outcompete LTBP1 for binding to LAP regulatory chain of TGF-beta. Controls activation of TGF-beta-1 (TGFB1) on the surface of activated regulatory T-cells (Tregs). Required for epithelial fusion during palate development by regulating activation of TGF-beta-3 (TGFB3). In Pongo abelii (Sumatran orangutan), this protein is Transforming growth factor beta activator LRRC32.